We begin with the raw amino-acid sequence, 760 residues long: MKLNVDGLLVYFPYDYIYPEQFSYMLELKRTLDAKGHGVLEMPSGTGKTVSLLALIMAYQRAYPLEVTKLIYCSRTVPEIEKVIEELRKLLSFYEKQEGEKLPFLGLALSSRKNLCIHPEVTPLRFGKDVDGKCHSLTASYVRAQYQRDSSLPHCRFYEEFDVHGRQVPLPTGIYNLDDLKAVGRRQGWCPYFLARYSILHANVVVYSYHYLLDPKIADLVSKELARKAVVVFDEAHNIDNVCIDSMSVNLTRRTLDRCQANLETLQKTVLRIKETDEQRLREEYRRLVEGLREASAARETDAHLANPVLPDEVLKEAVPGSIRTAEHFLGFLRRLLEYVKWRLRVQHVVQESPPAFLSGLAQRVCIQRKPLRFCAERLRSLLYTLEISDLTDFSPLTLLANFATLVSTYAKGFTIIIEPFDDRTPTIANPILHFSCMDASLAIKPVFERFQSVIITSGTLSPLDIYPKILDFHPVTMATFTMTLARVCLCPMIIGRGNDQVAISSKFETREDIAVIRNYGNLLLEMSAVVPDGIVAFFTSYQYMESTVASWYEQGILENIQRNKLLFIETQDGAETSVALEKYQEACENGRGAILLSVARGKVSEGIDFVHHYGRAVIMFGVPYVYTQSRILKARLEYLRDQFQIRENDFLTFDAMRHAAQCVGRAIRGKTDYGLMVFADKRFARADKRGKLPRWIQEHLTDANLNLTVDEGVQVAKYFLRQMAQPFHREDQLGLSLLSLEQLESEETLRRIEQIAQQL.

The Helicase ATP-binding domain occupies Gly7–Glu283. Met42 to Thr49 is an ATP binding site. Residues Cys116, Cys134, Cys155, and Cys190 each coordinate [4Fe-4S] cluster. A DEAH box motif is present at residues Asp234–His237. Residues Met438–Leu637 are mediates interaction with MMS19. The Nuclear localization signal motif lies at Lys682–Arg695.

It belongs to the helicase family. RAD3/XPD subfamily. In terms of assembly, component of the 7-subunit TFIIH core complex composed of XPB/ERCC3, XPD/ERCC2, GTF2H1, GTF2H2, GTF2H3, GTF2H4 and GTF2H5, which is active in NER. The core complex associates with the 3-subunit CDK-activating kinase (CAK) module composed of CCNH/cyclin H, CDK7 and MNAT1 to form the 10-subunit holoenzyme (holo-TFIIH) active in transcription. The interaction with GTF2H2 results in the stimulation of the 5'--&gt;3' helicase activity. Component of the MMXD complex, which includes CIAO1, ERCC2, CIAO2B, MMS19 and SLC25A5. Interacts with CIAO1 and CIAO2B; the interaction WITH CIAO2B is direct. Interacts with ATF7IP. Interacts directly with MMS19. Part of TBP-based Pol II pre-initiation complex (PIC), in which Pol II core assembles with general transcription factors and other specific initiation factors including GTF2E1, GTF2E2, GTF2F1, GTF2F2, TCEA1, ERCC2, ERCC3, GTF2H2, GTF2H3, GTF2H4, GTF2H5, GTF2A1, GTF2A2, GTF2B and TBP; this large multi-subunit PIC complex mediates DNA unwinding and targets Pol II core to the transcription start site where the first phosphodiester bond forms. Requires Mg(2+) as cofactor. The cofactor is [4Fe-4S] cluster. Post-translationally, ISGylated.

The protein localises to the nucleus. Its subcellular location is the cytoplasm. It localises to the cytoskeleton. The protein resides in the spindle. It carries out the reaction Couples ATP hydrolysis with the unwinding of duplex DNA at the replication fork by translocating in the 5'-3' direction. This creates two antiparallel DNA single strands (ssDNA). The leading ssDNA polymer is the template for DNA polymerase III holoenzyme which synthesizes a continuous strand.. It catalyses the reaction ATP + H2O = ADP + phosphate + H(+). Its function is as follows. ATP-dependent 5'-3' DNA helicase, component of the general transcription and DNA repair factor IIH (TFIIH) core complex, which is involved in general and transcription-coupled nucleotide excision repair (NER) of damaged DNA and, when complexed to CDK-activating kinase (CAK), involved in transcription by RNA polymerase II. In NER, TFIIH acts by opening DNA around the lesion to allow the excision of the damaged oligonucleotide and its replacement by a new DNA fragment. The ATP-dependent helicase activity of XPD/ERCC2 is required for DNA opening. In transcription, TFIIH has an essential role in transcription initiation. When the pre-initiation complex (PIC) has been established, TFIIH is required for promoter opening and promoter escape. Phosphorylation of the C-terminal tail (CTD) of the largest subunit of RNA polymerase II by the kinase module CAK controls the initiation of transcription. XPD/ERCC2 acts by forming a bridge between CAK and the core-TFIIH complex. Involved in the regulation of vitamin-D receptor activity. As part of the mitotic spindle-associated MMXD complex it plays a role in chromosome segregation. Might have a role in aging process and could play a causative role in the generation of skin cancers. The sequence is that of General transcription and DNA repair factor IIH helicase subunit XPD (ERCC2) from Bos taurus (Bovine).